Here is a 727-residue protein sequence, read N- to C-terminus: Malate synthase G (727 aa).

Residues Val117, Arg124–Tyr125, Ser275, and Arg312 each bind acetyl-CoA. Arg339 serves as the catalytic Proton acceptor. Glyoxylate is bound by residues Arg339, Glu431, and Gly456–Asp459. Residues Glu431 and Asp459 each contribute to the Mg(2+) site. Pro540 contributes to the acetyl-CoA binding site. A Cysteine sulfenic acid (-SOH) modification is found at Cys616. Asp630 (proton donor) is an active-site residue.

Belongs to the malate synthase family. GlcB subfamily. Monomer. The cofactor is Mg(2+).

It is found in the cytoplasm. It catalyses the reaction glyoxylate + acetyl-CoA + H2O = (S)-malate + CoA + H(+). It participates in carbohydrate metabolism; glyoxylate cycle; (S)-malate from isocitrate: step 2/2. Involved in the glycolate utilization. Catalyzes the condensation and subsequent hydrolysis of acetyl-coenzyme A (acetyl-CoA) and glyoxylate to form malate and CoA. The protein is Malate synthase G of Halalkalibacterium halodurans (strain ATCC BAA-125 / DSM 18197 / FERM 7344 / JCM 9153 / C-125) (Bacillus halodurans).